We begin with the raw amino-acid sequence, 391 residues long: Homocysteine-responsive endoplasmic reticulum-resident ubiquitin-like domain member 1 protein (391 aa).

Residue methionine 1 is modified to N-acetylmethionine. The Cytoplasmic portion of the chain corresponds to methionine 1–aspartate 263. Residues valine 10–leucine 72 form the Ubiquitin-like domain. The tract at residues lysine 100–arginine 126 is disordered. A compositionally biased stretch (polar residues) spans asparagine 112–glycine 124. The tract at residues glutamine 115–serine 200 is interaction with UBQLN1. Serine 135 is subject to Phosphoserine. A helical membrane pass occupies residues tryptophan 264–tyrosine 284. The Lumenal portion of the chain corresponds to serine 285–arginine 289. The helical transmembrane segment at phenylalanine 290–phenylalanine 310 threads the bilayer. The Cytoplasmic portion of the chain corresponds to arginine 311–asparagine 391. The tract at residues phenylalanine 318–glycine 359 is disordered. A compositionally biased stretch (basic and acidic residues) spans aspartate 346–leucine 357.

Interacts with PSEN1 and PSEN2. Interacts with UBXN6. Interacts with UBQLN1, UBQLN2 and UBQLN4. Component of the HRD1 complex, which comprises at least SYNV1/HRD1, FAM8A1, HERPUD1/HERP, OS9, SEL1L and UBE2J1. FAM8A1 binding to SYNV1 may promote recruitment of HERPUD1 to the HRD1 complex.

It localises to the endoplasmic reticulum membrane. In terms of biological role, component of the endoplasmic reticulum quality control (ERQC) system also called ER-associated degradation (ERAD) involved in ubiquitin-dependent degradation of misfolded endoplasmic reticulum proteins. Binds to ubiquilins and this interaction is required for efficient degradation of CD3D via the ERAD pathway. The chain is Homocysteine-responsive endoplasmic reticulum-resident ubiquitin-like domain member 1 protein (HERPUD1) from Pongo abelii (Sumatran orangutan).